A 222-amino-acid chain; its full sequence is Large ribosomal subunit protein mL64 (222 aa).

Disordered regions lie at residues Met1–Gln51, Arg136–Pro170, and Leu182–Ser222. Residues Ala141–Pro170 show a composition bias toward basic and acidic residues. A coiled-coil region spans residues Glu144–Asp213. The Nuclear localization signal signature appears at Lys184–Glu200. Low complexity predominate over residues Ala203–Gln212.

Belongs to the mitochondrion-specific ribosomal protein mL64 family. As to quaternary structure, component of the mitochondrial ribosome large subunit (39S) which comprises a 16S rRNA and about 50 distinct proteins. Interacts with GADD45A, GADD45B and GADD45G. Interacts with NR4A1 via the NR4A1 AB domain. Interacts with ATAD3A and ATAD3B.

Its subcellular location is the mitochondrion. It is found in the nucleus. Acts as a negative regulator of G1 to S cell cycle phase progression by inhibiting cyclin-dependent kinases. Inhibitory effects are additive with GADD45 proteins but also occur in the absence of GADD45 proteins. Acts as a repressor of the orphan nuclear receptor NR4A1 by inhibiting AB domain-mediated transcriptional activity. May be involved in the hormone-mediated regulation of NR4A1 transcriptional activity. May play a role in mitochondrial protein synthesis. The protein is Large ribosomal subunit protein mL64 (GADD45GIP1) of Bos taurus (Bovine).